The sequence spans 307 residues: MSKHVAVLMGGWSSEREISLRSGNACAEALEGEGYRVTRVDVGPDIATVLTDLKPDAALNALHGPAGEDGTIQGLLEILKIPYTHSGVLASALAMHKERAKTVMRAAGVSVPEGRVVNRHDAAKSHPLTPPYVVKPIAEGSSMGVIIVREERSHPPQILASDEWVYGEEVLAETYIAGRELTCAVLGDRALGVTEIKPVSGEWYDFDAKYAGGGSIHVLPADLKLNIYQRVQELALTAHQALGCRGVSRADLRYDDTPGGTGALVVLEVNTQPGMTQTSLVPEIAAHAGLSFGELVRWMVEDASLNR.

Residues 101–301 enclose the ATP-grasp domain; the sequence is KTVMRAAGVS…FGELVRWMVE (201 aa). 127–182 serves as a coordination point for ATP; it reads PLTPPYVVKPIAEGSSMGVIIVREERSHPPQILASDEWVYGEEVLAETYIAGRELT. 3 residues coordinate Mg(2+): Asp-251, Glu-268, and Asn-270.

This sequence belongs to the D-alanine--D-alanine ligase family. Mg(2+) is required as a cofactor. It depends on Mn(2+) as a cofactor.

It is found in the cytoplasm. The enzyme catalyses 2 D-alanine + ATP = D-alanyl-D-alanine + ADP + phosphate + H(+). The protein operates within cell wall biogenesis; peptidoglycan biosynthesis. In terms of biological role, cell wall formation. The chain is D-alanine--D-alanine ligase from Methylorubrum populi (strain ATCC BAA-705 / NCIMB 13946 / BJ001) (Methylobacterium populi).